A 266-amino-acid polypeptide reads, in one-letter code: MLNVLLRRKAFCLVTKKGMATATTAAATHTPRLKTFKVYRWNPDEPSAKPHLQSYQVDLNDCGPMVLDALLKIKDEQDSTLTFRRSCREGICGSCAMNIGGRNTLACICKIDQNESKQLKIYPLPHMFIVKDLVPDLTNFYQQYKSIQPYLQRSSFPKDGTEVLQSIEDRKKLDGLYECILCACCSTSCPSYWWNQEQYLGPAVLMQAYRWLIDSRDQATKTRKAMLNNSMSLYRCHTIMNCTRTCPKGLNPGLAIAEIKKSLAFA.

Residues 1–20 (MLNVLLRRKAFCLVTKKGMA) constitute a mitochondrion transit peptide. One can recognise a 2Fe-2S ferredoxin-type domain in the interval 36 to 127 (FKVYRWNPDE…QLKIYPLPHM (92 aa)). 4 residues coordinate [2Fe-2S] cluster: Cys-87, Cys-92, Cys-95, and Cys-107. Residues 169 to 199 (DRKKLDGLYECILCACCSTSCPSYWWNQEQY) enclose the 4Fe-4S ferredoxin-type domain. Cys-179, Cys-182, and Cys-185 together coordinate [4Fe-4S] cluster. Cys-189 contacts [3Fe-4S] cluster. Residue Trp-194 participates in a ubiquinone binding. Residues Cys-236 and Cys-242 each contribute to the [3Fe-4S] cluster site. Cys-246 contacts [4Fe-4S] cluster.

The protein belongs to the succinate dehydrogenase/fumarate reductase iron-sulfur protein family. In terms of assembly, component of complex II composed of four subunits: a flavoprotein (FP), an iron-sulfur protein (IP), and a cytochrome b composed of a large and a small subunit. The cofactor is [2Fe-2S] cluster. [3Fe-4S] cluster is required as a cofactor. It depends on [4Fe-4S] cluster as a cofactor.

The protein localises to the mitochondrion inner membrane. It carries out the reaction a quinone + succinate = fumarate + a quinol. Its pathway is carbohydrate metabolism; tricarboxylic acid cycle; fumarate from succinate (eukaryal route): step 1/1. Its function is as follows. Subunit of succinate dehydrogenase (SDH) that is involved in complex II of the mitochondrial electron transport chain and is responsible for transferring electrons from succinate to ubiquinone (coenzyme Q). SDH1 and SDH2 form the catalytic dimer. Electrons flow from succinate to the FAD bound to SDH1, and sequentially through the iron-sulfur clusters bound to SDH2 and enter the membrane dimer formed by SDH3 and SDH4. This Saccharomyces cerevisiae (strain ATCC 204508 / S288c) (Baker's yeast) protein is Succinate dehydrogenase [ubiquinone] iron-sulfur subunit, mitochondrial (SDH2).